A 245-amino-acid chain; its full sequence is Ribonuclease PH (245 aa).

Residues Arg-86 and 124–126 (GTR) contribute to the phosphate site.

Belongs to the RNase PH family. As to quaternary structure, homohexameric ring arranged as a trimer of dimers.

The enzyme catalyses tRNA(n+1) + phosphate = tRNA(n) + a ribonucleoside 5'-diphosphate. Phosphorolytic 3'-5' exoribonuclease that plays an important role in tRNA 3'-end maturation. Removes nucleotide residues following the 3'-CCA terminus of tRNAs; can also add nucleotides to the ends of RNA molecules by using nucleoside diphosphates as substrates, but this may not be physiologically important. Probably plays a role in initiation of 16S rRNA degradation (leading to ribosome degradation) during starvation. This chain is Ribonuclease PH, found in Bacillus cereus (strain ATCC 10987 / NRS 248).